The sequence spans 379 residues: Putative clathrin assembly protein At1g68110 (379 aa).

Residues 26 to 158 (NSSYRNADLE…SFLSDQIHRL (133 aa)) enclose the ENTH domain.

Its subcellular location is the membrane. The protein localises to the clathrin-coated pit. The protein resides in the golgi apparatus. It localises to the cytoplasmic vesicle. It is found in the clathrin-coated vesicle. The protein is Putative clathrin assembly protein At1g68110 of Arabidopsis thaliana (Mouse-ear cress).